A 406-amino-acid chain; its full sequence is MNVAKREFIRGMMAHYRASLPPPEHSVVIHELQKRVLDIGMLAVNKAHVELFGSHVSGFCTPHSDADISLTYRNFSPWLQGMERVDEQNNKRMTRFGKEASAMGMEDVRYIRARIPVVQFTDGVTGIHCDVSIGNIGGVENSKILCAIRQVFPDFYGAYIHLVKAWGKAREVIAPERSTFNSFTVTTMALMVLQELGLLPVFSKPTGEFGELTVADAEMLLQEFKLPPIYDSLHDDDEKLGEAVFFCLQRFAEYYAKYDFSAGTVSLIHPRRHRTVYERVVRRHLELLGSRKRLEWEKHIAEHKEDGPLDENDFSASMQNETTQRPSNSPYVVEDFVNYVNCGRRVQASRVRHIQQEFNRLREMLIDKESELKFDEVFRESDTVPRFQGFEGVGTRDHRVKTFRPQ.

Residues 1–15 constitute a mitochondrion transit peptide; it reads MNVAKREFIRGMMAH. UTP-binding positions include serine 54 and 64–65; that span reads SD. Mg(2+) is bound by residues aspartate 65 and aspartate 67. Residues 138 to 142, lysine 164, lysine 168, and 181 to 183 contribute to the UTP site; these read GVENS and NSF.

It belongs to the DNA polymerase type-B-like family. Component of the mitochondrial RNA editing core complex-like (RECC-like), also known as the editosome-like complex; only a small proportion of MEAT1 associates with the complex. Interacts with RNA-editing ligase REL1. The cofactor is Mg(2+).

The protein localises to the mitochondrion matrix. It carries out the reaction RNA(n) + UTP = RNA(n)-3'-uridine ribonucleotide + diphosphate. Its function is as follows. Terminal uridylyltransferase which, as part of the mitochondrial RNA editing core-like complex (RECC-like), is involved in the post-transcriptional editing of mitochondrial RNA, a process involving the addition and deletion of uridine (U) nucleotides in the pre-mRNA. Specifically, catalyzes the addition of U to single-stranded RNA with a preference for a 3'-terminal U and adds the number of Us specified by a guide RNA (gRNA) to precleaved double-stranded RNA editing substrates. Essential for insect and bloodstream developmental forms viability. This Trypanosoma brucei brucei protein is Terminal uridylyltransferase 7.